A 1404-amino-acid chain; its full sequence is MKTKAGKQKKRSVDSDDDVSRERRPKRATSGTNFKEKSLRFSEKYETVEAKKEQIVGDDEKEEKGVRFQSFGRVENWTISGYEDGSPVIWISTVIADYDCRKPSKKYKKLYDYFFEKACACVEVCKNLSTNPDTSLKELLAAVVRSMNGRKIFSSGGVIQEFVISQGEFIYNQLAGLDETSKNHETKFVDNRVLVSLRDESRKIHKAFSNVALRIDESKVLTSDQLMDGGEDEDLKYAKLLQEEEHMKSMDRSRNKRSSTTSAPNKFYIKINEDEIAHDYPLPSYYKNTKDETDELVLFNAGYAVDARNLPCRTLHNWALYNSDLMLISLEFLPMKPCADIDVTYLGQIKEWKIDFGEDMIFVLLRTDMAWYRLGKPSEQYAPWFEPILKTVRIGTSILALLKNETRMAKLSYTDVIKRLCGLEENDQAYISSTFFDVERYVIVHGQIILQFLTECPDEYIKRCPFVTGLASKMQDRHHTKWIIKKKRKMLQKGENLNLRRGKAPKVSKMKAMQATTTRLINRIWGEFYSIYSPEDPLEEIGAEEEFEEVEDVEEEDENEEEDTIQKAIEVQKADTLKKIRGSCKEMEIRWEGEILGETCAGEPLYGQALVGGRKMDVGGAVILEVDDQGETPLIYFVEYMFESSDNSKKLHGKLLQRGSETVLGTAANERELFLTNECLTVQLKDIKGTVSFEIRSRPWGHQYKKEHMAADKLDRARAEERKAKDLPIEYYCKSLYSPEKGGFFSLPRSDMGLGSGFCSSCKIRENEEERSKTKLNDSKTRFLSNGIKYSVGDFVYQIPNYLSKDRGKRRPVFKYGRNVGLRAFVVCQILDIVDLKEPKKGNTTSFEVKVRRFYRPDDVSAEEAYASDIQEVYYSEDTYILPPEAIKGKCEVMKKTDMPLCREYPILDHVYFCDRFYDSSNGCLKKLPYNMMLKFSTIKDDTLLREKKTETGSAMLLKPDEVPKGKRLATLDIFAGCGGLSYGLEKAGVSDTKWAIEYEEPAAQAFKQNHPKTTVFVDNCNVILRISWLRLLINDRAIMEKCGDVDDCISTTEAAELATKLDENQKSTLPLPGQVDFISGGPPCQGFSRLNRFSDGSWSKNQCQMILAFLSFADYFRPKYFLLENVKTFVSFNEGHTFHLTVASLLEMGYQVRFGLLEAGAYGISQPRKRAFIWAAAPNEVLPEWPEPMHVFNNPGFKIPLSQGLHYAAVQSTKFGAPFRSITVRDAIGDLPPIESGESKINKEEMRGSMTVLTDHICKKMNELNLIRCKKIPKTPGADWRDLPDEHVNLSNGIVKNIVPNLLNKAKDHNGYKGLYGRLDWHGNLPTCITNLQPMGLVGMCFHPDQDRIISVRECARSQGFPDSYKFSGNIKDKHRQVGNAVPPPLAFALGRKLKEALHLRNI.

Residues 1–10 are compositionally biased toward basic residues; that stretch reads MKTKAGKQKK. The segment at 1–35 is disordered; it reads MKTKAGKQKKRSVDSDDDVSRERRPKRATSGTNFK. Over residues 11-22 the composition is skewed to basic and acidic residues; sequence RSVDSDDDVSRE. Lys486 participates in a covalent cross-link: Glycyl lysine isopeptide (Lys-Gly) (interchain with G-Cter in ubiquitin). 2 consecutive BAH domains span residues 614–748 and 788–929; these read RKMD…FSLP and IKYS…KKLP. The SAM-dependent MTase C5-type domain occupies 969–1402; the sequence is LATLDIFAGC…RKLKEALHLR (434 aa). Residue Cys1085 is part of the active site.

This sequence belongs to the class I-like SAM-binding methyltransferase superfamily. C5-methyltransferase family.

The protein localises to the nucleus. It carries out the reaction a 2'-deoxycytidine in DNA + S-adenosyl-L-methionine = a 5-methyl-2'-deoxycytidine in DNA + S-adenosyl-L-homocysteine + H(+). Functionally, maintains chromatin CpG methylation that plays a role in genomic imprinting, regulation of embryogenesis and seed viability. Required for proper patterns of CG DNA methylation in dividing cells. Required during the endosperm development in seeds. In Arabidopsis thaliana (Mouse-ear cress), this protein is DNA (cytosine-5)-methyltransferase 3 (MET3).